The primary structure comprises 144 residues: MGMMSEFKTFAMRGNVIDLAVGVIIGAAFGKIVDSVVNDLIMPVIGRIVGKLDFSNMFVMLADPPPGTPQTLDALKKAGVPVFAYGNFLTIVVNFVILAFIIFMMVRAFNKMREKEAEPAAPAVTPEDIVLLREIRDSLKAPRS.

2 helical membrane-spanning segments follow: residues 16–36 and 86–106; these read VIDL…VDSV and GNFL…FMMV.

This sequence belongs to the MscL family. As to quaternary structure, homopentamer.

It localises to the cell inner membrane. Channel that opens in response to stretch forces in the membrane lipid bilayer. May participate in the regulation of osmotic pressure changes within the cell. The protein is Large-conductance mechanosensitive channel of Cupriavidus metallidurans (strain ATCC 43123 / DSM 2839 / NBRC 102507 / CH34) (Ralstonia metallidurans).